Here is a 288-residue protein sequence, read N- to C-terminus: Elongation factor Ts (288 aa).

An involved in Mg(2+) ion dislocation from EF-Tu region spans residues 82–85 (TDFV).

The protein belongs to the EF-Ts family.

The protein resides in the cytoplasm. Its function is as follows. Associates with the EF-Tu.GDP complex and induces the exchange of GDP to GTP. It remains bound to the aminoacyl-tRNA.EF-Tu.GTP complex up to the GTP hydrolysis stage on the ribosome. The protein is Elongation factor Ts of Prosthecochloris aestuarii (strain DSM 271 / SK 413).